Consider the following 210-residue polypeptide: Na(+)-translocating NADH-quinone reductase subunit D (210 aa).

The next 6 helical transmembrane spans lie at 10-30 (ILFA…GVCS), 42-62 (FVMT…VSLI), 72-92 (IIVQ…VLKA), 103-123 (VFVG…AYAM), 131-151 (FIDG…VAFF), and 178-198 (NGLM…IWAI).

It belongs to the NqrDE/RnfAE family. As to quaternary structure, composed of six subunits; NqrA, NqrB, NqrC, NqrD, NqrE and NqrF.

It localises to the cell inner membrane. The catalysed reaction is a ubiquinone + n Na(+)(in) + NADH + H(+) = a ubiquinol + n Na(+)(out) + NAD(+). Its function is as follows. NQR complex catalyzes the reduction of ubiquinone-1 to ubiquinol by two successive reactions, coupled with the transport of Na(+) ions from the cytoplasm to the periplasm. NqrA to NqrE are probably involved in the second step, the conversion of ubisemiquinone to ubiquinol. The polypeptide is Na(+)-translocating NADH-quinone reductase subunit D (Photobacterium profundum (strain SS9)).